The primary structure comprises 332 residues: Monoterpene synthase 25 (332 aa).

Mg(2+) is bound by residues Asp115, Glu180, Asn240, Ser244, and Glu248. The short motif at 115 to 121 (DDPVVFD) is the DDXXXXD motif element. The NSE/DTE motif motif lies at 240–248 (NDILSFYKE).

It belongs to the trichodiene synthase family. Mg(2+) serves as cofactor.

Terpene cyclase that catalyzes the cyclization of geranyl diphosphate (GPP) to myrcene and linalool. The protein is Monoterpene synthase 25 of Postia placenta (strain ATCC 44394 / Madison 698-R) (Brown rot fungus).